Consider the following 254-residue polypeptide: 3-deoxy-manno-octulosonate cytidylyltransferase (254 aa).

Belongs to the KdsB family.

It localises to the cytoplasm. The enzyme catalyses 3-deoxy-alpha-D-manno-oct-2-ulosonate + CTP = CMP-3-deoxy-beta-D-manno-octulosonate + diphosphate. It functions in the pathway nucleotide-sugar biosynthesis; CMP-3-deoxy-D-manno-octulosonate biosynthesis; CMP-3-deoxy-D-manno-octulosonate from 3-deoxy-D-manno-octulosonate and CTP: step 1/1. Its pathway is bacterial outer membrane biogenesis; lipopolysaccharide biosynthesis. Its function is as follows. Activates KDO (a required 8-carbon sugar) for incorporation into bacterial lipopolysaccharide in Gram-negative bacteria. This is 3-deoxy-manno-octulosonate cytidylyltransferase from Pseudomonas aeruginosa (strain ATCC 15692 / DSM 22644 / CIP 104116 / JCM 14847 / LMG 12228 / 1C / PRS 101 / PAO1).